Here is a 106-residue protein sequence, read N- to C-terminus: ATP-dependent Clp protease adapter protein ClpS (106 aa).

The protein belongs to the ClpS family. Binds to the N-terminal domain of the chaperone ClpA.

In terms of biological role, involved in the modulation of the specificity of the ClpAP-mediated ATP-dependent protein degradation. The chain is ATP-dependent Clp protease adapter protein ClpS from Yersinia enterocolitica serotype O:8 / biotype 1B (strain NCTC 13174 / 8081).